The sequence spans 428 residues: Isocitrate lyase 1 (428 aa).

91-93 contacts substrate; it reads SGW. A Mg(2+)-binding site is contributed by Asp153. Cys191 acts as the Proton acceptor in catalysis. Residues 192 to 193, Arg228, 313 to 317, and Thr347 each bind substrate; these read GH and NCSPS.

The protein belongs to the isocitrate lyase/PEP mutase superfamily. Isocitrate lyase family. As to quaternary structure, homotetramer. Requires Mg(2+) as cofactor.

It carries out the reaction D-threo-isocitrate = glyoxylate + succinate. The catalysed reaction is (2S,3R)-3-hydroxybutane-1,2,3-tricarboxylate = pyruvate + succinate. Its pathway is carbohydrate metabolism; glyoxylate cycle; (S)-malate from isocitrate: step 1/2. In terms of biological role, involved in the persistence and virulence of M.tuberculosis. Catalyzes the reversible formation of succinate and glyoxylate from isocitrate, a key step of the glyoxylate cycle, which operates as an anaplerotic route for replenishing the tricarboxylic acid cycle during growth on fatty acid substrates. It also catalyzes the formation of pyruvate and succinate from 2-methylisocitrate, a key step in the methylcitrate cycle (propionate degradation route). The protein is Isocitrate lyase 1 (icl1) of Mycobacterium tuberculosis (strain ATCC 35801 / TMC 107 / Erdman).